The following is a 137-amino-acid chain: Fluoride-specific ion channel FluC 2 (137 aa).

Transmembrane regions (helical) follow at residues 3–23 (MGGS…SVLG), 44–64 (WGTM…GALA), 76–96 (PWLF…SFSL), and 111–131 (LGNV…GFLL). Residues glycine 86 and threonine 89 each coordinate Na(+).

It belongs to the fluoride channel Fluc/FEX (TC 1.A.43) family.

The protein resides in the cell inner membrane. The enzyme catalyses fluoride(in) = fluoride(out). Its activity is regulated as follows. Na(+) is not transported, but it plays an essential structural role and its presence is essential for fluoride channel function. Functionally, fluoride-specific ion channel. Important for reducing fluoride concentration in the cell, thus reducing its toxicity. The chain is Fluoride-specific ion channel FluC 2 from Bradyrhizobium diazoefficiens (strain JCM 10833 / BCRC 13528 / IAM 13628 / NBRC 14792 / USDA 110).